We begin with the raw amino-acid sequence, 218 residues long: uncharacterized protein (218 aa).

An RING-type zinc finger spans residues 154–199 (CFICTMEYSRTDKNLHPIILNCGHNLCRSCINKLTGNGIVKCPFDR).

This is an uncharacterized protein from Caenorhabditis elegans.